Here is a 271-residue protein sequence, read N- to C-terminus: ATP synthase subunit delta (271 aa).

The protein belongs to the ATPase delta chain family. As to quaternary structure, F-type ATPases have 2 components, F(1) - the catalytic core - and F(0) - the membrane proton channel. F(1) has five subunits: alpha(3), beta(3), gamma(1), delta(1), epsilon(1). F(0) has three main subunits: a(1), b(2) and c(10-14). The alpha and beta chains form an alternating ring which encloses part of the gamma chain. F(1) is attached to F(0) by a central stalk formed by the gamma and epsilon chains, while a peripheral stalk is formed by the delta and b chains.

It localises to the cell membrane. In terms of biological role, f(1)F(0) ATP synthase produces ATP from ADP in the presence of a proton or sodium gradient. F-type ATPases consist of two structural domains, F(1) containing the extramembraneous catalytic core and F(0) containing the membrane proton channel, linked together by a central stalk and a peripheral stalk. During catalysis, ATP synthesis in the catalytic domain of F(1) is coupled via a rotary mechanism of the central stalk subunits to proton translocation. Its function is as follows. This protein is part of the stalk that links CF(0) to CF(1). It either transmits conformational changes from CF(0) to CF(1) or is implicated in proton conduction. The polypeptide is ATP synthase subunit delta (Streptomyces griseus subsp. griseus (strain JCM 4626 / CBS 651.72 / NBRC 13350 / KCC S-0626 / ISP 5235)).